A 298-amino-acid chain; its full sequence is MDTSVPVISSDYIQSARTEYKLTNDESPITLQFPSTLERTRVRIMGKCMKVDHVVIEYRNQVPFNAQGSVIVTIRDTRLSDEQQDQAQFTFPIGCNVDLHYFSASYFSIDDNVPWQLLYKVEDSNVKNGVTFAQIKAKLKLSAAKHSTDIRFKQPTIKILSKDYGPDCVDFWSVGKPKPIRRLIQNEPGTDYDTGPKYRPITVQPGETWATKSTIGRSTSMRYTSPKQIDIDDSSSKQYASEAEFPLRGLHQLPEASLDPGDSVSQTQSMTKKDIESIIEQTVNKCLIAHRGSSHKDL.

Residues 253 to 273 are disordered; it reads LPEASLDPGDSVSQTQSMTKK.

The protein belongs to the begomovirus movement protein BC1 family. Binds to dimeric supercoiled plasmid DNA. Post-translationally, phosphorylated.

Its subcellular location is the host cell membrane. It localises to the host microsome membrane. The protein localises to the host endoplasmic reticulum membrane. In terms of biological role, transports viral genome to neighboring plant cells directly through plasmosdesmata, without any budding. The movement protein allows efficient cell to cell propagation, by bypassing the host cell wall barrier. Begomovirus genome is shuttled out of nucleus by Nuclear shuttle protein (NSP) and the movement protein transports the DNA-NSP complex to cell plasmodesmata and facilitates further movement across the cell wall. This chain is Movement protein BC1, found in Hewittia sublobata (Coralbush).